Here is a 360-residue protein sequence, read N- to C-terminus: Mannonate dehydratase (360 aa).

Belongs to the mannonate dehydratase family. Fe(2+) serves as cofactor. Requires Mn(2+) as cofactor.

The enzyme catalyses D-mannonate = 2-dehydro-3-deoxy-D-gluconate + H2O. Its pathway is carbohydrate metabolism; pentose and glucuronate interconversion. In terms of biological role, catalyzes the dehydration of D-mannonate. The chain is Mannonate dehydratase (uxuA) from Thermotoga maritima (strain ATCC 43589 / DSM 3109 / JCM 10099 / NBRC 100826 / MSB8).